Consider the following 1906-residue polypeptide: MGDVKLVTSTRVSKTSLTLSPSVPAEAPAFTLPPRNIRVQLGATARFEGKVRGYPEPQITWYRNGHPLPEGDHYVVDHSIRGIFSLVIKGVQEGDSGKYTCEAANDGGVRQVTVELTVEGNSLKKYSLPSSAKTPGGRLSVPPVEHRPSIWGESPPKFATKPNRVVVREGQTGRFSCKITGRPQPQVTWTKGDIHLQQNERFNMFEKTGIQYLEIQNVQLADAGIYTCTVVNSAGKASVSAELTVQGPDKTDTHAQPLCMPPKPTTLATKAIENSDFKQATSNGIAKELKSTSTELMVETKDRLSAKKETFYTSREAKDGKQGQNQEANAVPLQESRGTKGPQVLQKTSSTITLQAVKAQPEPKAEPQTTFIRQAEDRKRTVQPLMTTTTQENPSLTGQVSPRSRETENRAGVRKSVKEEKREPLGIPPQFESRPQSLEASEGQEIKFKSKVSGKPKPDVEWFKEGVPIKTGEGIQIYEEDGTHCLWLKKACLGDSGSYSCAAFNPRGQTSTSWLLTVKRPKVEEVAPCFSSVLKGCTVSEGQDFVLQCYVGGVPVPEITWLLNEQPIQYAHSTFEAGVAKLTVQDALPEDDGIYTCLAENNAGRASCSAQVTVKEKKSSKKAEGTQAAKLNKTFAPIFLKGLTDLKVMDGSQVIMTVEVSANPCPEIIWLHNGKEIQETEDFHFEKKGNEYSLYIQEVFPEDTGKYTCEAWNELGETQTQATLTVQEPQDGIQPWFISKPRSVTAAAGQNVLISCAIAGDPFPTVHWFKDGQEITPGTGCEILQNEDIFTLILRNVQSRHAGQYEIQLRNQVGECSCQVSLMLRESSASRAEMLRDGRESASSGERRDGGNYGALTFGRTSGFKKSSSETRAAEEEQEDVRGVLKRRVETREHTEESLRQQEAEQLDFRDILGKKVSTKSFSEEDLKEIPAEQMDFRANLQRQVKPKTLSEEERKVHAPQQVDFRSVLAKKGTPKTPLPEKVPPPKPAVTDFRSVLGAKKKPPAENGSASTPAPNARAGSEAQNATPNSEAPAPKPVVKKEEKNDRKCEHGCAVVDGGIIGKKAENKPAASKPTPPPSKGTAPSFTEKLQDAKVADGEKLVLQCRISSDPPASVSWTLDSKAIKSSKSIVISQEGTLCSLTIEKVMPEDGGEYKCIAENAAGKAECACKVLVEDTSSTKAAKPAEKKTKKPKTTLPPVLSTESSEATVKKKPAPKTPPKAATPPQITQFPEDRKVRAGESVELFAKVVGTAPITCTWMKFRKQIQENEYIKIENAENSSKLTISSTKQEHCGCYTLVVENKLGSRQAQVNLTVVDKPDPPAGTPCASDIRSSSLTLSWYGSSYDGGSAVQSYTVEIWNSVDNKWTDLTTCRSTSFNVQDLQADREYKFRVRAANVYGISEPSQESEVVKVGEKQEEELKEEEAELSDDEGKETEVNYRTVTINTEQKVSDVYNIEERLGSGKFGQVFRLVEKKTGKVWAGKFFKAYSAKEKENIRDEISIMNCLHHPKLVQCVDAFEEKANIVMVLEMVSGGELFERIIDEDFELTERECIKYMRQISEGVEYIHKQGIVHLDLKPENIMCVNKTGTSIKLIDFGLARRLESAGSLKVLFGTPEFVAPEVINYEPIGYETDMWSIGVICYILVSGLSPFMGDNDNETLANVTSATWDFDDEAFDEISDDAKDFISNLLKKDMKSRLNCTQCLQHPWLQKDTKNMEAKKLSKDRMKKYMARRKWQKTGHAVRAIGRLSSMAMISGMSGRKASGSSPTSPINADKVENEDAFLEEVAEEKPHVKPYFTKTILDMEVVEGSAARFDCKIEGYPDPEVMWYKDDQPVKESRHFQIDYDEEGNCSLTISEVCGDDDAKYTCKAVNSLGEATCTAELLVETMGKEGEGEGEGEEDEEEEEE.

2 Ig-like C2-type domains span residues 28 to 117 (PAFT…VELT) and 156 to 244 (PKFA…AELT). Disordered stretches follow at residues 127 to 157 (SLPSSAKTPGGRLSVPPVEHRPSIWGESPPK) and 309 to 453 (ETFY…SKVS). Residues 309 to 321 (ETFYTSREAKDGK) are compositionally biased toward basic and acidic residues. 2 stretches are compositionally biased toward polar residues: residues 345–354 (LQKTSSTITL) and 384–402 (PLMTTTTQENPSLTGQVSP). The segment covering 403–424 (RSRETENRAGVRKSVKEEKREP) has biased composition (basic and acidic residues). 4 Ig-like C2-type domains span residues 429 to 517 (PQFE…WLLT), 521 to 613 (PKVE…AQVT), 637 to 725 (PIFL…ATLT), and 735 to 830 (PWFI…SSAS). The stretch at 660 to 676 (VSANPCPEIIWLHNGKE) is one IIA-1 repeat. The segment at 660–1833 (VSANPCPEII…EVMWYKDDQP (1174 aa)) is 4 X repeats, motif IIA. The IIB-1 repeat unit spans residues 693-708 (SLYIQEVFPEDTGKYT). Residues 693 to 1866 (SLYIQEVFPE…VCGDDDAKYT (1174 aa)) form a 5 X repeats, motif IIB region. Residues 758 to 774 (IAGDPFPTVHWFKDGQE) form an IIA-2 repeat. The stretch at 791 to 807 (TLILRNVQSRHAGQYEI) is one IIB-2 repeat. Disordered stretches follow at residues 831 to 881 (RAEM…QEDV) and 947 to 1086 (PKTL…APSF). 2 stretches are compositionally biased toward basic and acidic residues: residues 833 to 850 (EMLRDGRESASSGERRDG) and 867 to 881 (SSSETRAAEEEQEDV). The stretch at 970–987 (AKKGTPKTPLPEKVPPPK) is one III-1 repeat. The 4 X repeats, motif III stretch occupies residues 970–1226 (AKKGTPKTPL…TPPKAATPPQ (257 aa)). Over residues 977–988 (TPLPEKVPPPKP) the composition is skewed to pro residues. The stretch at 999–1016 (AKKKPPAENGSASTPAPN) is one III-2 repeat. The segment covering 1039-1051 (VKKEEKNDRKCEH) has biased composition (basic and acidic residues). The stretch at 1061 to 1078 (IGKKAENKPAASKPTPPP) is one III-3 repeat. 2 consecutive Ig-like C2-type domains span residues 1084–1172 (PSFT…CKVL) and 1225–1313 (PQIT…VNLT). An IIA-3 repeat occupies 1107–1123 (ISSDPPASVSWTLDSKA). An IIB-3 repeat occupies 1140–1156 (SLTIEKVMPEDGGEYKC). A disordered region spans residues 1180–1227 (KAAKPAEKKTKKPKTTLPPVLSTESSEATVKKKPAPKTPPKAATPPQI). An III-4 repeat occupies 1209–1226 (VKKKPAPKTPPKAATPPQ). Residues 1281–1297 (KLTISSTKQEHCGCYTL) form an IIB-4 repeat. A motif IA region spans residues 1317-1364 (KPDPPAGTPCASDIRSSSLTLSWYGSSYDGGSAVQSYTVEIWNSVDNK). In terms of domain architecture, Fibronectin type-III spans 1321 to 1414 (PAGTPCASDI…ESEVVKVGEK (94 aa)). Positions 1385-1402 (REYKFRVRAANVYGISEP) are motif IB. The disordered stretch occupies residues 1414-1433 (KQEEELKEEEAELSDDEGKE). The segment covering 1415–1432 (QEEELKEEEAELSDDEGK) has biased composition (acidic residues). The Protein kinase domain occupies 1453-1708 (YNIEERLGSG…CTQCLQHPWL (256 aa)). ATP contacts are provided by residues 1459-1467 (LGSGKFGQV) and Lys-1482. The active-site Proton acceptor is the Asp-1574. Positions 1700-1763 (TQCLQHPWLQ…SGMSGRKASG (64 aa)) are calmodulin-binding. A calmodulin autoinhibition (AM13) region region spans residues 1716-1728 (EAKKLSKDRMKKY). The interval 1730–1749 (ARRKWQKTGHAVRAIGRLSS) is calmodulin recognition (RS20) region. Ser-1762 is subject to Phosphoserine; by PKG. The residue at position 1768 (Ser-1768) is a Phosphoserine; by MAPK. The 92-residue stretch at 1794 to 1885 (PYFTKTILDM…ATCTAELLVE (92 aa)) folds into the Ig-like C2-type 9 domain. The stretch at 1817 to 1833 (IEGYPDPEVMWYKDDQP) is one IIA-4 repeat. Residues 1851–1866 (SLTISEVCGDDDAKYT) form an IIB-5 repeat. The disordered stretch occupies residues 1885-1906 (ETMGKEGEGEGEGEEDEEEEEE). Over residues 1893-1906 (GEGEGEEDEEEEEE) the composition is skewed to acidic residues.

It belongs to the protein kinase superfamily. CAMK Ser/Thr protein kinase family. All isoforms including Telokin bind calmodulin. It depends on Mg(2+) as a cofactor. Ca(2+) serves as cofactor. In terms of processing, the C-terminus is deglutamylated, leading to the formation of Myosin light chain kinase, smooth muscle, deglutamylated form. The C-terminus is variable, with one to five C-terminal glutamyl residues being removed producing five forms differring in their number of C-terminal glutamyl residues. Post-translationally, acetylated. Phosphorylation of telokin by PKG has no significant effect on its myosin binding activity, but promotes translocation to the membrane. As to expression, isoform telokin is expressed in gizzard, heart, lung, intestine, and skeletal muscle although the levels of the expression in the latter were much less than that in the gizzard.

Its subcellular location is the cytoplasm. The protein localises to the cytosol. It localises to the membrane. It carries out the reaction L-seryl-[myosin light chain] + ATP = O-phospho-L-seryl-[myosin light chain] + ADP + H(+). It catalyses the reaction L-threonyl-[myosin light chain] + ATP = O-phospho-L-threonyl-[myosin light chain] + ADP + H(+). Its activity is regulated as follows. Activated by phosphorylation on Tyr-478. Isoforms which lack this tyrosine residue are not regulated in this way. All catalytically active isoforms require binding to calcium and calmodulin for activation. Functionally, phosphorylates a specific serine in the N-terminus of a myosin light chain, which leads to the formation of calmodulin/MLCK signal transduction complexes which allow selective transduction of calcium signals. The sequence is that of Myosin light chain kinase, smooth muscle (Mylk) from Gallus gallus (Chicken).